Consider the following 492-residue polypeptide: 6-phosphogluconate dehydrogenase, decarboxylating 2 (492 aa).

Residues 12-17 (GLAVMG), 35-37 (NRT), 77-79 (IKA), and Asn105 each bind NADP(+). Residues Asn105 and 131–133 (SGG) each bind substrate. Catalysis depends on Lys185, which acts as the Proton acceptor. 188 to 189 (HN) contributes to the substrate binding site. Catalysis depends on Glu192, which acts as the Proton donor. 5 residues coordinate substrate: Tyr193, Lys262, Arg289, Arg449, and His455.

Belongs to the 6-phosphogluconate dehydrogenase family. As to quaternary structure, homodimer.

The enzyme catalyses 6-phospho-D-gluconate + NADP(+) = D-ribulose 5-phosphate + CO2 + NADPH. It participates in carbohydrate degradation; pentose phosphate pathway; D-ribulose 5-phosphate from D-glucose 6-phosphate (oxidative stage): step 3/3. Functionally, catalyzes the oxidative decarboxylation of 6-phosphogluconate to ribulose 5-phosphate and CO(2), with concomitant reduction of NADP to NADPH. The chain is 6-phosphogluconate dehydrogenase, decarboxylating 2 (GND2) from Saccharomyces cerevisiae (strain ATCC 204508 / S288c) (Baker's yeast).